Consider the following 332-residue polypeptide: Ketol-acid reductoisomerase (NADP(+)) (332 aa).

Residues 2-182 (AKVYHDTEVS…GATRAGVLET (181 aa)) enclose the KARI N-terminal Rossmann domain. NADP(+)-binding positions include 25–28 (YGSQ), Arg48, Ser53, and 83–86 (DTEQ). His108 is a catalytic residue. Gly134 contributes to the NADP(+) binding site. A KARI C-terminal knotted domain is found at 183-328 (TFKEETETDL…KVLREMMPWL (146 aa)). Residues Asp191, Glu195, Glu227, and Glu231 each contribute to the Mg(2+) site. Residue Ser252 participates in substrate binding.

It belongs to the ketol-acid reductoisomerase family. Mg(2+) serves as cofactor.

The catalysed reaction is (2R)-2,3-dihydroxy-3-methylbutanoate + NADP(+) = (2S)-2-acetolactate + NADPH + H(+). It catalyses the reaction (2R,3R)-2,3-dihydroxy-3-methylpentanoate + NADP(+) = (S)-2-ethyl-2-hydroxy-3-oxobutanoate + NADPH + H(+). It participates in amino-acid biosynthesis; L-isoleucine biosynthesis; L-isoleucine from 2-oxobutanoate: step 2/4. The protein operates within amino-acid biosynthesis; L-valine biosynthesis; L-valine from pyruvate: step 2/4. Functionally, involved in the biosynthesis of branched-chain amino acids (BCAA). Catalyzes an alkyl-migration followed by a ketol-acid reduction of (S)-2-acetolactate (S2AL) to yield (R)-2,3-dihydroxy-isovalerate. In the isomerase reaction, S2AL is rearranged via a Mg-dependent methyl migration to produce 3-hydroxy-3-methyl-2-ketobutyrate (HMKB). In the reductase reaction, this 2-ketoacid undergoes a metal-dependent reduction by NADPH to yield (R)-2,3-dihydroxy-isovalerate. The polypeptide is Ketol-acid reductoisomerase (NADP(+)) (Dictyoglomus turgidum (strain DSM 6724 / Z-1310)).